Here is a 209-residue protein sequence, read N- to C-terminus: GTP-binding protein RHB1 (209 aa).

Met-1 bears the N-acetylmethionine mark. Residues Gly-28, Lys-29, Thr-30, Thr-31, Val-42, Tyr-45, Thr-48, Asp-132, and Ala-172 each contribute to the GTP site. Mg(2+) is bound at residue Thr-30. Positions 45 to 53 (YYPTIENEF) match the Effector region motif. Residue Thr-48 coordinates Mg(2+). At Cys-206 the chain carries Cysteine methyl ester. A lipid anchor (S-farnesyl cysteine) is attached at Cys-206. Positions 207-209 (SIM) are cleaved as a propeptide — removed in mature form.

It belongs to the small GTPase superfamily. Rheb family. Interacts with BTN2.

The protein localises to the cell membrane. The catalysed reaction is GTP + H2O = GDP + phosphate + H(+). Its function is as follows. Binds GTP and exhibits intrinsic GTPase activity. Involved in the regulation of arginine and lysine uptake. Acts through the CAN1 permease. The protein is GTP-binding protein RHB1 (RHB1) of Saccharomyces cerevisiae (strain ATCC 204508 / S288c) (Baker's yeast).